The primary structure comprises 566 residues: Proline--tRNA ligase (566 aa).

It belongs to the class-II aminoacyl-tRNA synthetase family. ProS type 1 subfamily. In terms of assembly, homodimer.

It localises to the cytoplasm. It carries out the reaction tRNA(Pro) + L-proline + ATP = L-prolyl-tRNA(Pro) + AMP + diphosphate. In terms of biological role, catalyzes the attachment of proline to tRNA(Pro) in a two-step reaction: proline is first activated by ATP to form Pro-AMP and then transferred to the acceptor end of tRNA(Pro). As ProRS can inadvertently accommodate and process non-cognate amino acids such as alanine and cysteine, to avoid such errors it has two additional distinct editing activities against alanine. One activity is designated as 'pretransfer' editing and involves the tRNA(Pro)-independent hydrolysis of activated Ala-AMP. The other activity is designated 'posttransfer' editing and involves deacylation of mischarged Ala-tRNA(Pro). The misacylated Cys-tRNA(Pro) is not edited by ProRS. The polypeptide is Proline--tRNA ligase (Shouchella clausii (strain KSM-K16) (Alkalihalobacillus clausii)).